Consider the following 195-residue polypeptide: MPVGVPKVPFRLPGEEDASWVDLYNRLYRQRLLFLGQDVNNEISNQIMGLMVYLSIEDGTKDQYLFINSPGGSVIPGVGLFDTMQFVSPDVHTICIGLAASMGSFILVGGEITKRLAFPHARVMIHQPASSFSKGKTGEFVLESTELLNLRETITKVYVQRTGKPLWVISEDLERDVFMSAPEAQAHGIVDLVAV.

Catalysis depends on S101, which acts as the Nucleophile. H126 is a catalytic residue.

This sequence belongs to the peptidase S14 family. As to quaternary structure, component of the chloroplastic Clp protease core complex.

It is found in the plastid. Its subcellular location is the chloroplast stroma. It catalyses the reaction Hydrolysis of proteins to small peptides in the presence of ATP and magnesium. alpha-casein is the usual test substrate. In the absence of ATP, only oligopeptides shorter than five residues are hydrolyzed (such as succinyl-Leu-Tyr-|-NHMec, and Leu-Tyr-Leu-|-Tyr-Trp, in which cleavage of the -Tyr-|-Leu- and -Tyr-|-Trp bonds also occurs).. Cleaves peptides in various proteins in a process that requires ATP hydrolysis. Has a chymotrypsin-like activity. Plays a major role in the degradation of misfolded proteins. This chain is ATP-dependent Clp protease proteolytic subunit, found in Cucumis sativus (Cucumber).